The sequence spans 210 residues: Leucyl/phenylalanyl-tRNA--protein transferase (210 aa).

This sequence belongs to the L/F-transferase family.

The protein localises to the cytoplasm. It carries out the reaction N-terminal L-lysyl-[protein] + L-leucyl-tRNA(Leu) = N-terminal L-leucyl-L-lysyl-[protein] + tRNA(Leu) + H(+). The catalysed reaction is N-terminal L-arginyl-[protein] + L-leucyl-tRNA(Leu) = N-terminal L-leucyl-L-arginyl-[protein] + tRNA(Leu) + H(+). The enzyme catalyses L-phenylalanyl-tRNA(Phe) + an N-terminal L-alpha-aminoacyl-[protein] = an N-terminal L-phenylalanyl-L-alpha-aminoacyl-[protein] + tRNA(Phe). In terms of biological role, functions in the N-end rule pathway of protein degradation where it conjugates Leu, Phe and, less efficiently, Met from aminoacyl-tRNAs to the N-termini of proteins containing an N-terminal arginine or lysine. This is Leucyl/phenylalanyl-tRNA--protein transferase from Deinococcus radiodurans (strain ATCC 13939 / DSM 20539 / JCM 16871 / CCUG 27074 / LMG 4051 / NBRC 15346 / NCIMB 9279 / VKM B-1422 / R1).